The chain runs to 151 residues: UPF0098 protein MTH_273 (151 aa).

This sequence belongs to the UPF0098 family.

The polypeptide is UPF0098 protein MTH_273 (Methanothermobacter thermautotrophicus (strain ATCC 29096 / DSM 1053 / JCM 10044 / NBRC 100330 / Delta H) (Methanobacterium thermoautotrophicum)).